We begin with the raw amino-acid sequence, 504 residues long: Glucose-6-phosphate isomerase (504 aa).

The active-site Proton donor is the E333. Active-site residues include H364 and K473.

It belongs to the GPI family.

It is found in the cytoplasm. It carries out the reaction alpha-D-glucose 6-phosphate = beta-D-fructose 6-phosphate. The protein operates within carbohydrate biosynthesis; gluconeogenesis. Its pathway is carbohydrate degradation; glycolysis; D-glyceraldehyde 3-phosphate and glycerone phosphate from D-glucose: step 2/4. Its function is as follows. Catalyzes the reversible isomerization of glucose-6-phosphate to fructose-6-phosphate. This chain is Glucose-6-phosphate isomerase, found in Stenotrophomonas maltophilia (strain R551-3).